The following is a 267-amino-acid chain: Myb-related protein Hv1 (267 aa).

HTH myb-type domains are found at residues 9 to 61 (KAHT…INYL) and 62 to 116 (RPDL…RRKL). 2 consecutive DNA-binding regions (H-T-H motif) follow at residues 37 to 61 (WRSL…INYL) and 89 to 112 (WSLI…NTHI).

In terms of tissue distribution, germinating seed and apical meristem of shoot and root.

Its subcellular location is the nucleus. In terms of biological role, possible transcription activator in response to an external signal. May be involved in the regulation of flavonoid biosynthesis. This Hordeum vulgare (Barley) protein is Myb-related protein Hv1 (MYB1).